Reading from the N-terminus, the 241-residue chain is DNA repair protein RecO (241 aa).

Belongs to the RecO family.

Its function is as follows. Involved in DNA repair and RecF pathway recombination. The chain is DNA repair protein RecO from Orientia tsutsugamushi (strain Boryong) (Rickettsia tsutsugamushi).